Consider the following 429-residue polypeptide: Glutamate-1-semialdehyde 2,1-aminomutase 2 (429 aa).

Lys-268 carries the post-translational modification N6-(pyridoxal phosphate)lysine.

Belongs to the class-III pyridoxal-phosphate-dependent aminotransferase family. HemL subfamily. As to quaternary structure, homodimer. Requires pyridoxal 5'-phosphate as cofactor.

The protein resides in the cytoplasm. The catalysed reaction is (S)-4-amino-5-oxopentanoate = 5-aminolevulinate. It functions in the pathway porphyrin-containing compound metabolism; protoporphyrin-IX biosynthesis; 5-aminolevulinate from L-glutamyl-tRNA(Glu): step 2/2. The chain is Glutamate-1-semialdehyde 2,1-aminomutase 2 from Staphylococcus aureus (strain Mu50 / ATCC 700699).